A 4885-amino-acid polypeptide reads, in one-letter code: Centrosome-associated protein CEP530 (4885 aa).

Positions valine 1437–glutamate 1528 form a coiled coil.

The protein resides in the cytoplasm. The protein localises to the cytoskeleton. It localises to the microtubule organizing center. Its subcellular location is the centrosome. In terms of biological role, required for proper nuclei segregation during the cell division. Plays a role in coordination of karyokinesis and cytokinesis during the tachyzoite cell cycle. This Toxoplasma gondii (strain ATCC 50611 / Me49) protein is Centrosome-associated protein CEP530.